Here is a 95-residue protein sequence, read N- to C-terminus: CRISPR-associated endoribonuclease Cas2 1 (95 aa).

Aspartate 11 contributes to the Mg(2+) binding site.

Belongs to the CRISPR-associated endoribonuclease Cas2 protein family. As to quaternary structure, homodimer, forms a heterotetramer with a Cas1 homodimer. Requires Mg(2+) as cofactor.

Its function is as follows. CRISPR (clustered regularly interspaced short palindromic repeat), is an adaptive immune system that provides protection against mobile genetic elements (viruses, transposable elements and conjugative plasmids). CRISPR clusters contain sequences complementary to antecedent mobile elements and target invading nucleic acids. CRISPR clusters are transcribed and processed into CRISPR RNA (crRNA). Functions as a ssRNA-specific endoribonuclease. Involved in the integration of spacer DNA into the CRISPR cassette. This is CRISPR-associated endoribonuclease Cas2 1 from Methanospirillum hungatei JF-1 (strain ATCC 27890 / DSM 864 / NBRC 100397 / JF-1).